We begin with the raw amino-acid sequence, 307 residues long: Mitochondrial brown fat uncoupling protein 1 (307 aa).

At 1 to 10 the chain is on the mitochondrial intermembrane side; that stretch reads MVSQTTSEVQ. Residues 11–32 traverse the membrane as a helical segment; sequence PTMGVKIFSAGVAACLADIITF. Solcar repeat units follow at residues 11–102, 111–201, and 210–295; these read PTMG…VQEY, PTLV…MKGA, and DDVP…LKKE. Over 33–73 the chain is Mitochondrial matrix; sequence PLDTAKVRLQIQGEGQTSSTIRYKGVLGTITTLAKTEGLPK. Fatty acid 16:0 is bound at residue lysine 56. Residues 74-96 traverse the membrane as a helical segment; the sequence is LYSGLPAGIQRQISFASLRIGLY. At 97-116 the chain is on the mitochondrial intermembrane side; it reads DTVQEYFSSGKETPPTLVNR. A helical transmembrane segment spans residues 117 to 133; the sequence is ISAGLMTGGVAVFIGQP. The Mitochondrial matrix portion of the chain corresponds to 134 to 178; it reads TEVVKVRLQAQSHLHGIKPRYTGTYNAYRIIATTESLSTLWKGTT. The helical transmembrane segment at 179–195 threads the bilayer; sequence PNLLRNVIINCTELVTY. Residues 196-212 are Mitochondrial intermembrane-facing; that stretch reads DLMKGALVNNQILADDV. The helical transmembrane segment at 213–232 threads the bilayer; the sequence is PCHLLSALVAGFCTTFLASP. Over 233–266 the chain is Mitochondrial matrix; that stretch reads ADVVKTRFINSLPGQYPSVPSCAMTMFTKEGPTA. Cysteine 254 is modified (cysteine sulfenic acid (-SOH)). A helical transmembrane segment spans residues 267–289; that stretch reads FFKGFVPSFLRLASWNVIMFVCF. Lysine 269 is a fatty acid 16:0 binding site. The Mitochondrial intermembrane segment spans residues 290-307; that stretch reads EQLKKELMKSRQTVDCTT.

Belongs to the mitochondrial carrier (TC 2.A.29) family. Most probably functions as a monomer. Binds one purine nucleotide per monomer. However, has also been suggested to function as a homodimer or a homotetramer. Tightly associates with cardiolipin in the mitochondrion inner membrane; may stabilize and regulate its activity. Post-translationally, may undergo sulfenylation upon cold exposure. May increase the sensitivity of UCP1 thermogenic function to the activation by noradrenaline probably through structural effects. May undergo ubiquitin-mediated proteasomal degradation. Brown adipose tissue.

Its subcellular location is the mitochondrion inner membrane. The enzyme catalyses H(+)(in) = H(+)(out). With respect to regulation, has no constitutive proton transporter activity and has to be activated by long-chain fatty acids/LCFAs. Inhibited by purine nucleotides. Both purine nucleotides and LCFAs bind the cytosolic side of the transporter and directly compete to activate or inhibit it. Activated by noradrenaline and reactive oxygen species. Despite lacking canonical translational encoding for selenocysteine, a small pool of the protein has been observed to selectively incorporate selenocysteine at 'Cys-254'. Selenocysteine-modified protein is highly sensitive to redox modification and may constitute a pool of protein highly sensitive to activation by elevated levels of reactive oxygen species (ROS). Its function is as follows. Mitochondrial protein responsible for thermogenic respiration, a specialized capacity of brown adipose tissue and beige fat that participates in non-shivering adaptive thermogenesis to temperature and diet variations and more generally to the regulation of energy balance. Functions as a long-chain fatty acid/LCFA and proton symporter, simultaneously transporting one LCFA and one proton through the inner mitochondrial membrane. However, LCFAs remaining associated with the transporter via their hydrophobic tails, it results in an apparent transport of protons activated by LCFAs. Thereby, dissipates the mitochondrial proton gradient and converts the energy of substrate oxydation into heat instead of ATP. Regulates the production of reactive oxygen species/ROS by mitochondria. The sequence is that of Mitochondrial brown fat uncoupling protein 1 from Phodopus sungorus (Striped hairy-footed hamster).